A 581-amino-acid polypeptide reads, in one-letter code: Serine/threonine protein phosphatase 2A 55 kDa regulatory subunit B alpha isoform (581 aa).

The segment at M1–P27 is disordered. Over residues A14–G25 the composition is skewed to low complexity. WD repeat units lie at residues Q47–S86 and E123–V164. Residues R172 to G189 show a composition bias toward low complexity. The interval R172–P192 is disordered. WD repeat units follow at residues A241 to N279, D290 to N330, E349 to S387, and D492 to I530.

This sequence belongs to the phosphatase 2A regulatory subunit B family. PP2A consists of a common heteromeric enzyme, composed of a catalytic subunit (subunits C), a constant regulatory subunit (subunit A), and a variety of regulatory subunits such as subunits B (the R2/B/PR55/B55, R3/B''/PR72/PR130/PR59 and R5/B'/B56 families).

Functionally, the B regulatory subunit may modulate substrate selectivity and catalytic activity, and may also direct the localization of the catalytic enzyme to a particular subcellular compartment. This is Serine/threonine protein phosphatase 2A 55 kDa regulatory subunit B alpha isoform from Oryza sativa subsp. japonica (Rice).